A 198-amino-acid chain; its full sequence is MQLIGLTGGIASGKSTIASRLAELGAAVVDADRIAREVVEPGTPALAEIRRAFGDGVIAPDGTLDRPELGAIVFGDPAALRILNGITHPAVLRESTARFEAAAVADPDAIVVYDVPLLVESANRYPFDLVVVAHADAATRARRLFELRGMDPVAAERRIGSQVSDAERLSAADLVIDTGGTLEETYRQVDALWAGLRG.

Residues 3–198 (LIGLTGGIAS…VDALWAGLRG (196 aa)) form the DPCK domain. 11 to 16 (ASGKST) serves as a coordination point for ATP.

Belongs to the CoaE family.

It is found in the cytoplasm. The enzyme catalyses 3'-dephospho-CoA + ATP = ADP + CoA + H(+). It participates in cofactor biosynthesis; coenzyme A biosynthesis; CoA from (R)-pantothenate: step 5/5. Functionally, catalyzes the phosphorylation of the 3'-hydroxyl group of dephosphocoenzyme A to form coenzyme A. This chain is Dephospho-CoA kinase, found in Leifsonia xyli subsp. xyli (strain CTCB07).